Consider the following 467-residue polypeptide: Argininosuccinate lyase (467 aa).

It belongs to the lyase 1 family. Argininosuccinate lyase subfamily.

Its subcellular location is the cytoplasm. It carries out the reaction 2-(N(omega)-L-arginino)succinate = fumarate + L-arginine. Its pathway is amino-acid biosynthesis; L-arginine biosynthesis; L-arginine from L-ornithine and carbamoyl phosphate: step 3/3. The protein is Argininosuccinate lyase of Anaeromyxobacter dehalogenans (strain 2CP-C).